The primary structure comprises 88 residues: Small ribosomal subunit protein uS15 (88 aa).

It belongs to the universal ribosomal protein uS15 family. Part of the 30S ribosomal subunit. Forms a bridge to the 50S subunit in the 70S ribosome, contacting the 23S rRNA.

In terms of biological role, one of the primary rRNA binding proteins, it binds directly to 16S rRNA where it helps nucleate assembly of the platform of the 30S subunit by binding and bridging several RNA helices of the 16S rRNA. Functionally, forms an intersubunit bridge (bridge B4) with the 23S rRNA of the 50S subunit in the ribosome. The sequence is that of Small ribosomal subunit protein uS15 from Flavobacterium psychrophilum (strain ATCC 49511 / DSM 21280 / CIP 103535 / JIP02/86).